Consider the following 359-residue polypeptide: sn-1 acyl-lipid omega-3 desaturase (ferredoxin) (359 aa).

Transmembrane regions (helical) follow at residues 44–64 (LGYFFLDVGLIAGFYALAAYL) and 67–87 (WFFYPIFWLIQGTLFWSLFVV). A Histidine box-1 motif is present at residues 89-93 (HDCGH). The Histidine box-2 signature appears at 125–129 (HRTHH). 3 helical membrane passes run 153–173 (AWYEKLLRFYLPLIAYPIYLF), 206–226 (LAAFVGFLGFLTWQFGWLFLL), and 228–248 (FYVAPYLVFVVWLDLVTFLHH). Positions 291-295 (HHIFS) match the Histidine box-3 motif.

It belongs to the fatty acid desaturase type 2 family. It depends on Fe(2+) as a cofactor.

Its subcellular location is the membrane. The enzyme catalyses a 1-[(9Z,12Z)-octadecdienoyl]-2-acyl-glycerolipid + 2 reduced [2Fe-2S]-[ferredoxin] + O2 + 2 H(+) = a 1-[(9Z,12Z,15Z)-octadectrienoyl]-2-acyl-glycerolipid + 2 oxidized [2Fe-2S]-[ferredoxin] + 2 H2O. It catalyses the reaction a 1-[(6Z,9Z,12Z)-octadectrienoyl]-2-acyl-glycerolipid + 2 reduced [2Fe-2S]-[ferredoxin] + O2 + 2 H(+) = a 1-[(6Z,9Z,12Z,15Z)-octadectetraenoyl]-2-acyl-glycerolipid + 2 oxidized [2Fe-2S]-[ferredoxin] + 2 H2O. It functions in the pathway lipid metabolism; polyunsaturated fatty acid biosynthesis. In terms of biological role, desaturase involved in fatty acid biosynthesis. Introduces a double bond at carbon 15 of linoleoyl and gamma-linolenoyl groups attached to the sn-1 position of the glycerol moiety of membrane glycerolipids. The protein is sn-1 acyl-lipid omega-3 desaturase (ferredoxin) of Synechocystis sp. (strain ATCC 27184 / PCC 6803 / Kazusa).